Here is a 388-residue protein sequence, read N- to C-terminus: Succinate--CoA ligase [ADP-forming] subunit beta (388 aa).

Residues 9-244 (KQLFARYGLP…QSQEDPREAQ (236 aa)) enclose the ATP-grasp domain. Residues Lys46, 53 to 55 (GRG), Glu99, Thr102, and Glu107 each bind ATP. 2 residues coordinate Mg(2+): Asn199 and Asp213. Substrate-binding positions include Asn264 and 321–323 (GIV).

This sequence belongs to the succinate/malate CoA ligase beta subunit family. Heterotetramer of two alpha and two beta subunits. Requires Mg(2+) as cofactor.

The enzyme catalyses succinate + ATP + CoA = succinyl-CoA + ADP + phosphate. The catalysed reaction is GTP + succinate + CoA = succinyl-CoA + GDP + phosphate. Its pathway is carbohydrate metabolism; tricarboxylic acid cycle; succinate from succinyl-CoA (ligase route): step 1/1. In terms of biological role, succinyl-CoA synthetase functions in the citric acid cycle (TCA), coupling the hydrolysis of succinyl-CoA to the synthesis of either ATP or GTP and thus represents the only step of substrate-level phosphorylation in the TCA. The beta subunit provides nucleotide specificity of the enzyme and binds the substrate succinate, while the binding sites for coenzyme A and phosphate are found in the alpha subunit. The polypeptide is Succinate--CoA ligase [ADP-forming] subunit beta (Salmonella dublin (strain CT_02021853)).